Consider the following 247-residue polypeptide: Probable transcriptional regulatory protein Dvul_0986 (247 aa).

The segment at 1–22 (MAGHSKWANIQHRKGRQDAKRG) is disordered.

This sequence belongs to the TACO1 family.

Its subcellular location is the cytoplasm. This is Probable transcriptional regulatory protein Dvul_0986 from Nitratidesulfovibrio vulgaris (strain DP4) (Desulfovibrio vulgaris).